The sequence spans 256 residues: Ribosomal RNA small subunit methyltransferase J (256 aa).

S-adenosyl-L-methionine-binding positions include 104 to 105 (RD), 120 to 121 (ER), 156 to 157 (SS), and D174.

Belongs to the methyltransferase superfamily. RsmJ family.

It is found in the cytoplasm. The catalysed reaction is guanosine(1516) in 16S rRNA + S-adenosyl-L-methionine = N(2)-methylguanosine(1516) in 16S rRNA + S-adenosyl-L-homocysteine + H(+). Specifically methylates the guanosine in position 1516 of 16S rRNA. The sequence is that of Ribosomal RNA small subunit methyltransferase J from Yersinia pseudotuberculosis serotype O:3 (strain YPIII).